Here is a 439-residue protein sequence, read N- to C-terminus: Casein kinase I homolog 3 (439 aa).

A Protein kinase domain is found at 15–286 (YRVGKKIGEG…LRSLFDSLLL (272 aa)). ATP-binding positions include 21–29 (IGEGSFGML) and Lys44. Asp134 functions as the Proton acceptor in the catalytic mechanism. Residues 366–426 (DGIPGKAASP…PSKEKSRKKF (61 aa)) form a disordered region. Over residues 372–413 (AASPQVQQQQQTSSAQQQQPQRVEQPAPQTTQPTQVDTQQAA) the composition is skewed to low complexity.

This sequence belongs to the protein kinase superfamily. CK1 Ser/Thr protein kinase family. Casein kinase I subfamily.

The protein resides in the cytoplasm. It catalyses the reaction L-seryl-[protein] + ATP = O-phospho-L-seryl-[protein] + ADP + H(+). The enzyme catalyses L-threonyl-[protein] + ATP = O-phospho-L-threonyl-[protein] + ADP + H(+). In terms of biological role, casein kinases are operationally defined by their preferential utilization of acidic proteins such as caseins as substrates. The protein is Casein kinase I homolog 3 (cki3) of Schizosaccharomyces pombe (strain 972 / ATCC 24843) (Fission yeast).